We begin with the raw amino-acid sequence, 673 residues long: RAS guanyl-releasing protein 4 (673 aa).

2 stretches are compositionally biased toward basic residues: residues 1–10 (MNRKDSKRKS) and 20–32 (GRGR…RHKT). 2 disordered regions span residues 1-34 (MNRK…KTCP) and 162-188 (QSLG…PGLG). One can recognise an N-terminal Ras-GEF domain in the interval 49–172 (GMLNEGGCSE…SLGDFSSRLS (124 aa)). The Ras-GEF domain occupies 201 to 432 (ETGELAEHLT…YELSYAREPR (232 aa)). The region spanning 466-501 (HVEQLVESVFKNYDPDGRGTISQEDFERLSGNFPFA) is the EF-hand domain. The Phorbol-ester/DAG-type zinc finger occupies 540-590 (LHTFQEVTFRKPTFCNSCSGFLWGVTKQGYRCRDCGLCCHRHCRDQVKVEC). 2 disordered regions span residues 593 to 618 (RPGA…ASCG) and 638 to 673 (RHAW…KLNS). Pro residues predominate over residues 603–612 (PEAPVPPTPV).

It belongs to the RASGRP family.

The protein localises to the cytoplasm. It is found in the cell membrane. Functionally, functions as a cation- and diacylglycerol (DAG)-regulated nucleotide exchange factor activating Ras through the exchange of bound GDP for GTP. In neutrophils, participates in a phospholipase C-activating N-formyl peptide-activated GPCR (G protein-coupled receptor) signaling pathway by promoting Ras-mediated activation of PIK3CG/PI3Kgamma to promote neutrophil functional responses. In CD117(+) dendritic cells and mast cells, participates in an lipopolysaccharide (LPS)-activated signaling pathway that stimulates the production of interferon-gamma and other pro-inflammatory cytokines by natural killer (NK) cells. May function in mast cell differentiation. Does not appear to be required for the development of B-cells, DC-cells, T-cells, or NK-cells. In Bos taurus (Bovine), this protein is RAS guanyl-releasing protein 4 (RASGRP4).